The primary structure comprises 408 residues: Histidine--tRNA ligase (408 aa).

It belongs to the class-II aminoacyl-tRNA synthetase family. As to quaternary structure, homodimer.

It is found in the cytoplasm. It catalyses the reaction tRNA(His) + L-histidine + ATP = L-histidyl-tRNA(His) + AMP + diphosphate + H(+). This is Histidine--tRNA ligase from Campylobacter concisus (strain 13826).